Reading from the N-terminus, the 123-residue chain is D-ribose pyranase (123 aa).

Residue His20 is the Proton donor of the active site. Substrate-binding positions include Asp28, His90, and 112-114 (YAN).

Belongs to the RbsD / FucU family. RbsD subfamily. Homodecamer.

It localises to the cytoplasm. It catalyses the reaction beta-D-ribopyranose = beta-D-ribofuranose. Its pathway is carbohydrate metabolism; D-ribose degradation; D-ribose 5-phosphate from beta-D-ribopyranose: step 1/2. Catalyzes the interconversion of beta-pyran and beta-furan forms of D-ribose. The polypeptide is D-ribose pyranase (Corynebacterium glutamicum (strain R)).